The chain runs to 321 residues: Nodulation protein D 1 (321 aa).

The region spanning 6-63 is the HTH lysR-type domain; that stretch reads LDLNLLVALDALMTERKLTAAARSINLSQPAMSAAITRLRTYFRDELFTMNGRELVPT. Residues 23–42 constitute a DNA-binding region (H-T-H motif); the sequence is LTAAARSINLSQPAMSAAIT.

Belongs to the LysR transcriptional regulatory family.

Its function is as follows. NodD regulates the expression of the nodABCFE genes which encode other nodulation proteins. NodD is also a negative regulator of its own expression. Binds flavonoids as inducers. This is Nodulation protein D 1 (nodD1) from Bradyrhizobium japonicum.